We begin with the raw amino-acid sequence, 25 residues long: Chaperonin GroEL (25 aa).

It belongs to the chaperonin (HSP60) family. As to quaternary structure, forms a cylinder of 14 subunits composed of two heptameric rings stacked back-to-back. Interacts with the co-chaperonin GroES.

The protein localises to the cytoplasm. It carries out the reaction ATP + H2O + a folded polypeptide = ADP + phosphate + an unfolded polypeptide.. Functionally, together with its co-chaperonin GroES, plays an essential role in assisting protein folding. The GroEL-GroES system forms a nano-cage that allows encapsulation of the non-native substrate proteins and provides a physical environment optimized to promote and accelerate protein folding. In Delftia acidovorans (Pseudomonas acidovorans), this protein is Chaperonin GroEL.